The chain runs to 137 residues: Competence protein D (137 aa).

Involved in transformation (genetic competence for DNA uptake). In Haemophilus influenzae (strain ATCC 51907 / DSM 11121 / KW20 / Rd), this protein is Competence protein D (comD).